The chain runs to 167 residues: NADH-quinone oxidoreductase subunit B 2 (167 aa).

Cysteine 38, cysteine 39, cysteine 103, and cysteine 132 together coordinate [4Fe-4S] cluster.

The protein belongs to the complex I 20 kDa subunit family. NDH-1 is composed of 14 different subunits. Subunits NuoB, C, D, E, F, and G constitute the peripheral sector of the complex. [4Fe-4S] cluster is required as a cofactor.

Its subcellular location is the cell inner membrane. The enzyme catalyses a quinone + NADH + 5 H(+)(in) = a quinol + NAD(+) + 4 H(+)(out). Functionally, NDH-1 shuttles electrons from NADH, via FMN and iron-sulfur (Fe-S) centers, to quinones in the respiratory chain. The immediate electron acceptor for the enzyme in this species is believed to be ubiquinone. Couples the redox reaction to proton translocation (for every two electrons transferred, four hydrogen ions are translocated across the cytoplasmic membrane), and thus conserves the redox energy in a proton gradient. The chain is NADH-quinone oxidoreductase subunit B 2 from Rhizobium meliloti (strain 1021) (Ensifer meliloti).